An 88-amino-acid chain; its full sequence is Beta-insect excitatory toxin LqhIT1d (88 aa).

Positions 1-18 are cleaved as a signal peptide; that stretch reads MKFFLLFLVVLPIMGVLG. Positions 20–83 constitute an LCN-type CS-alpha/beta domain; it reads KNGFAVDSNG…ISDTRKKLCD (64 aa). Intrachain disulfides connect Cys34/Cys55, Cys40/Cys60, Cys44/Cys62, and Cys56/Cys82.

This sequence belongs to the long (4 C-C) scorpion toxin superfamily. Sodium channel inhibitor family. Beta subfamily. In terms of tissue distribution, expressed by the venom gland.

Its subcellular location is the secreted. In terms of biological role, excitatory insect toxins induce a spastic paralysis. They bind voltage-independently at site-4 of sodium channels (Nav) and shift the voltage of activation toward more negative potentials thereby affecting sodium channel activation and promoting spontaneous and repetitive firing. The sequence is that of Beta-insect excitatory toxin LqhIT1d from Leiurus hebraeus (Hebrew deathstalker scorpion).